Reading from the N-terminus, the 367-residue chain is Probable dual-specificity RNA methyltransferase RlmN (367 aa).

Glu92 acts as the Proton acceptor in catalysis. The Radical SAM core domain occupies 98–326; sequence QEYGLSVCVT…YDTLKKNGIN (229 aa). The cysteines at positions 105 and 341 are disulfide-linked. The [4Fe-4S] cluster site is built by Cys112, Cys116, and Cys119. Residues 164–165, Ser196, 219–221, and Asn297 contribute to the S-adenosyl-L-methionine site; these read GE and SLH. Catalysis depends on Cys341, which acts as the S-methylcysteine intermediate.

It belongs to the radical SAM superfamily. RlmN family. [4Fe-4S] cluster serves as cofactor.

Its subcellular location is the cytoplasm. The enzyme catalyses adenosine(2503) in 23S rRNA + 2 reduced [2Fe-2S]-[ferredoxin] + 2 S-adenosyl-L-methionine = 2-methyladenosine(2503) in 23S rRNA + 5'-deoxyadenosine + L-methionine + 2 oxidized [2Fe-2S]-[ferredoxin] + S-adenosyl-L-homocysteine. It carries out the reaction adenosine(37) in tRNA + 2 reduced [2Fe-2S]-[ferredoxin] + 2 S-adenosyl-L-methionine = 2-methyladenosine(37) in tRNA + 5'-deoxyadenosine + L-methionine + 2 oxidized [2Fe-2S]-[ferredoxin] + S-adenosyl-L-homocysteine. In terms of biological role, specifically methylates position 2 of adenine 2503 in 23S rRNA and position 2 of adenine 37 in tRNAs. The sequence is that of Probable dual-specificity RNA methyltransferase RlmN from Listeria monocytogenes serovar 1/2a (strain ATCC BAA-679 / EGD-e).